The chain runs to 293 residues: Carbapenem-hydrolyzing beta-lactamase KPC (293 aa).

Positions 1 to 24 (MSLYRRLVLLSCLSWPLAGFSATA) are cleaved as a signal peptide. Serine 69 acts as the Acyl-ester intermediate in catalysis. The active-site Proton acceptor is the glutamate 167. 233–235 (KTG) serves as a coordination point for substrate.

This sequence belongs to the class-A beta-lactamase family.

The catalysed reaction is a beta-lactam + H2O = a substituted beta-amino acid. With respect to regulation, not inhibited by EDTA, inhibited by clavulanic acid and tazobactam. In terms of biological role, hydrolyzes carbapenems, penicillins, cephalosporins and aztreonam with varying efficiency. The protein is Carbapenem-hydrolyzing beta-lactamase KPC (bla) of Klebsiella oxytoca.